The chain runs to 204 residues: Large ribosomal subunit protein bL17 (204 aa).

The disordered stretch occupies residues 124–204 (QAVGEAERAR…DDDGPAESKS (81 aa)). The span at 128-142 (EAERARGTRFSERRK) shows a compositional bias: basic and acidic residues. Over residues 156-191 (SESPTAAAVAAQSAEEQAPVEETLTAQAAETSAATV) the composition is skewed to low complexity. A compositionally biased stretch (acidic residues) spans 192-204 (EETDDDGPAESKS).

It belongs to the bacterial ribosomal protein bL17 family. As to quaternary structure, part of the 50S ribosomal subunit. Contacts protein L32.

The protein is Large ribosomal subunit protein bL17 of Frankia alni (strain DSM 45986 / CECT 9034 / ACN14a).